Here is a 273-residue protein sequence, read N- to C-terminus: Large ribosomal subunit protein uL2cy (273 aa).

2 disordered regions span residues 1-22 (MAIH…DSQV) and 224-273 (NPVD…RRRK).

This sequence belongs to the universal ribosomal protein uL2 family. As to quaternary structure, part of the 50S ribosomal subunit.

The protein resides in the plastid. The protein localises to the chloroplast. This Chloranthus spicatus (Chulantree) protein is Large ribosomal subunit protein uL2cy (rpl2-B).